We begin with the raw amino-acid sequence, 128 residues long: Large ribosomal subunit protein bL19 (128 aa).

It belongs to the bacterial ribosomal protein bL19 family.

This protein is located at the 30S-50S ribosomal subunit interface and may play a role in the structure and function of the aminoacyl-tRNA binding site. This Paracidovorax citrulli (strain AAC00-1) (Acidovorax citrulli) protein is Large ribosomal subunit protein bL19.